The chain runs to 314 residues: Methionyl-tRNA formyltransferase (314 aa).

(6S)-5,6,7,8-tetrahydrofolate is bound at residue 110–113 (SLLP).

The protein belongs to the Fmt family.

The catalysed reaction is L-methionyl-tRNA(fMet) + (6R)-10-formyltetrahydrofolate = N-formyl-L-methionyl-tRNA(fMet) + (6S)-5,6,7,8-tetrahydrofolate + H(+). Its function is as follows. Attaches a formyl group to the free amino group of methionyl-tRNA(fMet). The formyl group appears to play a dual role in the initiator identity of N-formylmethionyl-tRNA by promoting its recognition by IF2 and preventing the misappropriation of this tRNA by the elongation apparatus. The polypeptide is Methionyl-tRNA formyltransferase (Dichelobacter nodosus (strain VCS1703A)).